We begin with the raw amino-acid sequence, 404 residues long: Cysteine desulfurase IscS (404 aa).

Residues 75 to 76, asparagine 155, glutamine 183, and 203 to 205 each bind pyridoxal 5'-phosphate; these read AT and SGH. The residue at position 206 (lysine 206) is an N6-(pyridoxal phosphate)lysine. Threonine 243 serves as a coordination point for pyridoxal 5'-phosphate. Cysteine 328 (cysteine persulfide intermediate) is an active-site residue. Cysteine 328 is a [2Fe-2S] cluster binding site.

It belongs to the class-V pyridoxal-phosphate-dependent aminotransferase family. NifS/IscS subfamily. Homodimer. Forms a heterotetramer with IscU, interacts with other sulfur acceptors. Pyridoxal 5'-phosphate serves as cofactor.

The protein localises to the cytoplasm. It catalyses the reaction (sulfur carrier)-H + L-cysteine = (sulfur carrier)-SH + L-alanine. It participates in cofactor biosynthesis; iron-sulfur cluster biosynthesis. Its function is as follows. Master enzyme that delivers sulfur to a number of partners involved in Fe-S cluster assembly, tRNA modification or cofactor biosynthesis. Catalyzes the removal of elemental sulfur atoms from cysteine to produce alanine. Functions as a sulfur delivery protein for Fe-S cluster synthesis onto IscU, an Fe-S scaffold assembly protein, as well as other S acceptor proteins. This chain is Cysteine desulfurase IscS, found in Shewanella putrefaciens (strain CN-32 / ATCC BAA-453).